The following is a 194-amino-acid chain: dTTP/UTP pyrophosphatase (194 aa).

The active-site Proton acceptor is Asp-73.

Belongs to the Maf family. YhdE subfamily. The cofactor is a divalent metal cation.

It is found in the cytoplasm. The enzyme catalyses dTTP + H2O = dTMP + diphosphate + H(+). It carries out the reaction UTP + H2O = UMP + diphosphate + H(+). In terms of biological role, nucleoside triphosphate pyrophosphatase that hydrolyzes dTTP and UTP. May have a dual role in cell division arrest and in preventing the incorporation of modified nucleotides into cellular nucleic acids. The protein is dTTP/UTP pyrophosphatase of Clostridium botulinum (strain Okra / Type B1).